A 153-amino-acid polypeptide reads, in one-letter code: Large ribosomal subunit protein uL13 (153 aa).

Belongs to the universal ribosomal protein uL13 family. Part of the 50S ribosomal subunit.

Its function is as follows. This protein is one of the early assembly proteins of the 50S ribosomal subunit, although it is not seen to bind rRNA by itself. It is important during the early stages of 50S assembly. The sequence is that of Large ribosomal subunit protein uL13 from Methylobacterium sp. (strain 4-46).